Here is a 357-residue protein sequence, read N- to C-terminus: Adenylate isopentenyltransferase 1, chloroplastic (357 aa).

The transit peptide at Met1–Leu71 directs the protein to the chloroplast. Over residues Thr20–Phe39 the composition is skewed to low complexity. A disordered region spans residues Thr20–Ser58. Gly72–Ser79 provides a ligand contact to ATP.

This sequence belongs to the IPP transferase family. As to expression, expressed in the vascular stele of the roots, in the xylem precursor cell files in the root tip, in leaf axils, ovules, and immature seeds.

The protein resides in the plastid. It localises to the chloroplast. The enzyme catalyses dimethylallyl diphosphate + AMP = N(6)-(dimethylallyl)adenosine 5'-phosphate + diphosphate. It catalyses the reaction dimethylallyl diphosphate + ADP = N(6)-(dimethylallyl)adenosine 5'-diphosphate + diphosphate. It carries out the reaction dimethylallyl diphosphate + ATP = N(6)-(dimethylallyl)adenosine 5'-triphosphate + diphosphate. Its function is as follows. Involved in cytokinin biosynthesis. Catalyzes the transfer of an isopentenyl group from dimethylallyl diphosphate (DMAPP) to ATP, ADP and AMP. Adenine, adenosine, isopentenylpyrophosphate and 1-hydroxy-2-methyl-2-(E)-butenyl 4-diphosphate (HMBDP) are not used as substrates. In Arabidopsis thaliana (Mouse-ear cress), this protein is Adenylate isopentenyltransferase 1, chloroplastic (IPT1).